A 278-amino-acid polypeptide reads, in one-letter code: NAD-capped RNA hydrolase NudC (278 aa).

Substrate is bound at residue Arg-84. Zn(2+) contacts are provided by Cys-114 and Cys-117. Glu-127 contributes to the substrate binding site. Zn(2+) is bound at residue Cys-132. Tyr-140 is a substrate binding site. In terms of domain architecture, Nudix hydrolase spans 141–264 (PRISPSMIVL…SIARYLIEAY (124 aa)). Ala-174, Glu-190, and Glu-194 together coordinate a divalent metal cation. The Nudix box motif lies at 175–196 (GFVEPGESAEDCVHREVMEEVQ). 208–215 (QCWPFPHS) serves as a coordination point for substrate. A divalent metal cation is bound at residue Glu-235. Ala-257 provides a ligand contact to substrate.

Belongs to the Nudix hydrolase family. NudC subfamily. In terms of assembly, homodimer. It depends on Mg(2+) as a cofactor. Requires Mn(2+) as cofactor. Zn(2+) serves as cofactor.

It carries out the reaction a 5'-end NAD(+)-phospho-ribonucleoside in mRNA + H2O = a 5'-end phospho-adenosine-phospho-ribonucleoside in mRNA + beta-nicotinamide D-ribonucleotide + 2 H(+). The catalysed reaction is NAD(+) + H2O = beta-nicotinamide D-ribonucleotide + AMP + 2 H(+). The enzyme catalyses NADH + H2O = reduced beta-nicotinamide D-ribonucleotide + AMP + 2 H(+). Functionally, mRNA decapping enzyme that specifically removes the nicotinamide adenine dinucleotide (NAD) cap from a subset of mRNAs by hydrolyzing the diphosphate linkage to produce nicotinamide mononucleotide (NMN) and 5' monophosphate mRNA. The NAD-cap is present at the 5'-end of some mRNAs and stabilizes RNA against 5'-processing. Has preference for mRNAs with a 5'-end purine. Catalyzes the hydrolysis of a broad range of dinucleotide pyrophosphates. This chain is NAD-capped RNA hydrolase NudC, found in Pseudomonas syringae pv. syringae (strain B728a).